The following is a 271-amino-acid chain: Phospholipid scramblase family member 5 (271 aa).

Residues 1–10 (MASKDAQNQR) are compositionally biased toward polar residues. The tract at residues 1–33 (MASKDAQNQRRGLPGFLPGAPDPDQSLPASSNP) is disordered. Positions 1 to 45 (MASKDAQNQRRGLPGFLPGAPDPDQSLPASSNPGNQAWQLSLPLP) are proline-rich domain (PRD).

It belongs to the phospholipid scramblase family.

This chain is Phospholipid scramblase family member 5 (PLSCR5), found in Homo sapiens (Human).